Here is a 461-residue protein sequence, read N- to C-terminus: DNA polymerase delta subunit 3 (461 aa).

Disordered regions lie at residues Val-148 to Gly-229, Val-249 to Leu-380, and Tyr-399 to Lys-461. The span at Ala-155–Pro-172 shows a compositional bias: polar residues. Residues Asp-205–Glu-214 show a composition bias toward basic and acidic residues. The segment covering Ala-215–Lys-228 has biased composition (low complexity). The segment covering Lys-279–Ser-304 has biased composition (basic and acidic residues). Residues Gly-371–Leu-380 show a composition bias toward basic residues. Residues Val-427–Lys-436 are compositionally biased toward basic and acidic residues. A PIP-box motif is present at residues Gln-451–Cys-458.

Component of both the DNA polymerase delta and DNA polymerase zeta complexes. The tetrameric DNA polymerase delta complex (Pol-delta4), which consists of POLD1/p125, POLD2/p50, POLD3/p66/p68 and POLD4/p12, with POLD1 bearing DNA polymerase and 3' to 5' proofreading exonuclease activities.

It is found in the cytoplasm. The protein localises to the nucleus. Functionally, accessory component of both the DNA polymerase delta complex and the DNA polymerase zeta complex. As a component of the trimeric and tetrameric DNA polymerase delta complexes (Pol-delta3 and Pol-delta4, respectively), plays a role in high fidelity genome replication, including in lagging strand synthesis, and repair. Required for optimal Pol-delta activity. Stabilizes the Pol-delta complex and plays a major role in Pol-delta stimulation by PCNA. Pol-delta3 and Pol-delta4 are characterized by the absence or the presence of POLD4. They exhibit differences in catalytic activity. Most notably, Pol-delta3 shows higher proofreading activity than Pol-delta4. Although both Pol-delta3 and Pol-delta4 process Okazaki fragments in vitro, Pol-delta3 may also be better suited to fulfill this task, exhibiting near-absence of strand displacement activity compared to Pol-delta4 and stalling on encounter with the 5'-blocking oligonucleotides. Pol-delta3 idling process may avoid the formation of a gap, while maintaining a nick that can be readily ligated. Along with DNA polymerase kappa, DNA polymerase delta carries out approximately half of nucleotide excision repair (NER) synthesis following UV irradiation. In this context, POLD3, along with PCNA and RFC1-replication factor C complex, is required to recruit POLD1, the catalytic subunit of the polymerase delta complex, to DNA damage sites. Under conditions of DNA replication stress, required for the repair of broken replication forks through break-induced replication (BIR). Involved in the translesion synthesis (TLS) of templates carrying O6-methylguanine or abasic sites performed by Pol-delta4, independently of DNA polymerase zeta (REV3L) or eta (POLH). Facilitates abasic site bypass by DNA polymerase delta by promoting extension from the nucleotide inserted opposite the lesion. Also involved in TLS, as a component of the tetrameric DNA polymerase zeta complex. Along with POLD2, dramatically increases the efficiency and processivity of DNA synthesis of the DNA polymerase zeta complex compared to the minimal zeta complex, consisting of only REV3L and REV7. The protein is DNA polymerase delta subunit 3 (POLD3) of Gallus gallus (Chicken).